The primary structure comprises 198 residues: Transcription antitermination protein NusB (198 aa).

The protein belongs to the NusB family.

Involved in transcription antitermination. Required for transcription of ribosomal RNA (rRNA) genes. Binds specifically to the boxA antiterminator sequence of the ribosomal RNA (rrn) operons. The polypeptide is Transcription antitermination protein NusB (Methylococcus capsulatus (strain ATCC 33009 / NCIMB 11132 / Bath)).